Consider the following 178-residue polypeptide: MRKHLGGCWLAIVCILLFSQLCSVKARGIKHRIKWNRKVLPSTSQVTEARTAEIRPGAFIKQGRKLDIDFGVEGNRYYEANYWQFPDGIHYNGCSKANVTKEKFITSCINATQAANQEELSREKQDNKLYQRVLWQLIRELCSTKHCDFWLERGAGLRVTLDQPMMLCLLVFIWFIVK.

The signal sequence occupies residues 1 to 25; the sequence is MRKHLGGCWLAIVCILLFSQLCSVK. A flexible tail region spans residues 27–50; sequence RGIKHRIKWNRKVLPSTSQVTEAR. Residues 51–154 are globular; that stretch reads TAEIRPGAFI…KHCDFWLERG (104 aa). 2 disulfide bridges follow: cysteine 94/cysteine 147 and cysteine 108/cysteine 142. N-linked (GlcNAc...) asparagine glycosylation is found at asparagine 98 and asparagine 110. A cu(2+) binding region spans residues 124-141; sequence KQDNKLYQRVLWQLIREL. Glycine 154 carries the GPI-anchor amidated glycine lipid modification. A propeptide spans 155-178 (removed in mature form); that stretch reads AGLRVTLDQPMMLCLLVFIWFIVK.

Belongs to the prion family. Post-translationally, N-glycosylated. In terms of processing, O-glycosylated. Strongly expressed in testis. Detected at low levels in ovary, spleen, kidney and mammary gland.

The protein resides in the cell membrane. Functionally, required for normal acrosome reaction and for normal male fertility. Can bind Cu(2+). The polypeptide is Prion-like protein doppel (PRND) (Bos taurus (Bovine)).